The chain runs to 72 residues: UPF0352 protein NTHI1007 (72 aa).

It belongs to the UPF0352 family.

The sequence is that of UPF0352 protein NTHI1007 from Haemophilus influenzae (strain 86-028NP).